Reading from the N-terminus, the 292-residue chain is MTARYIAIDWGSTNLRAWLYQGDHCLESRQSEAGVTRLNGKSPAAVLAEVTTDWREEKTPVVMAGMVGSNVGWKVAPYLSVPACFSSIGEQLTSVGDNIWIIPGLCVSHDDNHNVMRGEETQLIGARALAPSSLYVMPGTHCKWVQADSQQINDFRTVMTGELHHLLLNHSLIGAGLPPQENSADAFTAGLERGLNTPAILPQLFEVRASHVLGTLPREQVSEFLSGLLIGAEVASMRDYVAHQHAITLVAGTSLTARYQQAFQAMGCDVTAVAGDTAFQAGIRSIAHAVAN.

Belongs to the DgoK family.

The catalysed reaction is 2-dehydro-3-deoxy-D-galactonate + ATP = 2-dehydro-3-deoxy-6-phospho-D-galactonate + ADP + H(+). It functions in the pathway carbohydrate acid metabolism; D-galactonate degradation; D-glyceraldehyde 3-phosphate and pyruvate from D-galactonate: step 2/3. The chain is 2-dehydro-3-deoxygalactonokinase (dgoK) from Escherichia coli (strain K12).